A 113-amino-acid polypeptide reads, in one-letter code: Large ribosomal subunit protein uL22 (113 aa).

Belongs to the universal ribosomal protein uL22 family. Part of the 50S ribosomal subunit.

Functionally, this protein binds specifically to 23S rRNA; its binding is stimulated by other ribosomal proteins, e.g. L4, L17, and L20. It is important during the early stages of 50S assembly. It makes multiple contacts with different domains of the 23S rRNA in the assembled 50S subunit and ribosome. In terms of biological role, the globular domain of the protein is located near the polypeptide exit tunnel on the outside of the subunit, while an extended beta-hairpin is found that lines the wall of the exit tunnel in the center of the 70S ribosome. The sequence is that of Large ribosomal subunit protein uL22 from Xanthomonas oryzae pv. oryzae (strain MAFF 311018).